Here is a 298-residue protein sequence, read N- to C-terminus: Putative F-box and FNIP repeat-containing protein R286 (298 aa).

The 45-residue stretch at 4–48 (LNVLESHVILHIIEFLPDHEKIKFMSTCKSLYEFRCHVTYNNFYV) folds into the F-box domain. 2 FNIP repeats span residues 124–165 (FNKP…LGHN) and 255–297 (WNFD…FISR).

The chain is Putative F-box and FNIP repeat-containing protein R286 from Acanthamoeba polyphaga (Amoeba).